The sequence spans 365 residues: Phosphoserine aminotransferase (365 aa).

Residue Arg-40 coordinates L-glutamate. Pyridoxal 5'-phosphate-binding positions include 74–75 (AS), Phe-99, Thr-155, Asp-177, and Gln-200. Lys-201 carries the post-translational modification N6-(pyridoxal phosphate)lysine. Residue 241 to 242 (NT) participates in pyridoxal 5'-phosphate binding.

The protein belongs to the class-V pyridoxal-phosphate-dependent aminotransferase family. SerC subfamily. As to quaternary structure, homodimer. Pyridoxal 5'-phosphate serves as cofactor.

It localises to the cytoplasm. It catalyses the reaction O-phospho-L-serine + 2-oxoglutarate = 3-phosphooxypyruvate + L-glutamate. The catalysed reaction is 4-(phosphooxy)-L-threonine + 2-oxoglutarate = (R)-3-hydroxy-2-oxo-4-phosphooxybutanoate + L-glutamate. The protein operates within amino-acid biosynthesis; L-serine biosynthesis; L-serine from 3-phospho-D-glycerate: step 2/3. Catalyzes the reversible conversion of 3-phosphohydroxypyruvate to phosphoserine and of 3-hydroxy-2-oxo-4-phosphonooxybutanoate to phosphohydroxythreonine. In Lactococcus lactis subsp. lactis (strain IL1403) (Streptococcus lactis), this protein is Phosphoserine aminotransferase.